Here is a 137-residue protein sequence, read N- to C-terminus: Nucleoside diphosphate kinase (137 aa).

Positions 9, 57, 85, 91, and 102 each coordinate ATP. His-119 serves as the catalytic Pros-phosphohistidine intermediate.

Belongs to the NDK family. In terms of assembly, homotetramer. It depends on Mg(2+) as a cofactor.

The protein localises to the cytoplasm. It carries out the reaction a 2'-deoxyribonucleoside 5'-diphosphate + ATP = a 2'-deoxyribonucleoside 5'-triphosphate + ADP. The catalysed reaction is a ribonucleoside 5'-diphosphate + ATP = a ribonucleoside 5'-triphosphate + ADP. Its function is as follows. Major role in the synthesis of nucleoside triphosphates other than ATP. The ATP gamma phosphate is transferred to the NDP beta phosphate via a ping-pong mechanism, using a phosphorylated active-site intermediate. This Streptococcus thermophilus (strain CNRZ 1066) protein is Nucleoside diphosphate kinase.